Reading from the N-terminus, the 488-residue chain is Protein nucleotidyltransferase YdiU (488 aa).

ATP contacts are provided by G91, G93, R94, K114, D126, G127, R177, and R184. A disordered region spans residues 108–127 (RFDIQLKGSGPTPYSRRGDG). D253 serves as the catalytic Proton acceptor. N254 and D263 together coordinate Mg(2+). D263 serves as a coordination point for ATP.

Belongs to the SELO family. Mg(2+) serves as cofactor. It depends on Mn(2+) as a cofactor.

It carries out the reaction L-seryl-[protein] + ATP = 3-O-(5'-adenylyl)-L-seryl-[protein] + diphosphate. It catalyses the reaction L-threonyl-[protein] + ATP = 3-O-(5'-adenylyl)-L-threonyl-[protein] + diphosphate. The catalysed reaction is L-tyrosyl-[protein] + ATP = O-(5'-adenylyl)-L-tyrosyl-[protein] + diphosphate. The enzyme catalyses L-histidyl-[protein] + UTP = N(tele)-(5'-uridylyl)-L-histidyl-[protein] + diphosphate. It carries out the reaction L-seryl-[protein] + UTP = O-(5'-uridylyl)-L-seryl-[protein] + diphosphate. It catalyses the reaction L-tyrosyl-[protein] + UTP = O-(5'-uridylyl)-L-tyrosyl-[protein] + diphosphate. Its function is as follows. Nucleotidyltransferase involved in the post-translational modification of proteins. It can catalyze the addition of adenosine monophosphate (AMP) or uridine monophosphate (UMP) to a protein, resulting in modifications known as AMPylation and UMPylation. This is Protein nucleotidyltransferase YdiU from Bacillus cereus (strain AH820).